A 209-amino-acid polypeptide reads, in one-letter code: Ribosomal RNA large subunit methyltransferase E (209 aa).

S-adenosyl-L-methionine contacts are provided by Gly-63, Trp-65, Asp-83, Asp-99, and Asp-124. Residue Lys-164 is the Proton acceptor of the active site.

It belongs to the class I-like SAM-binding methyltransferase superfamily. RNA methyltransferase RlmE family.

The protein localises to the cytoplasm. It catalyses the reaction uridine(2552) in 23S rRNA + S-adenosyl-L-methionine = 2'-O-methyluridine(2552) in 23S rRNA + S-adenosyl-L-homocysteine + H(+). Its function is as follows. Specifically methylates the uridine in position 2552 of 23S rRNA at the 2'-O position of the ribose in the fully assembled 50S ribosomal subunit. The chain is Ribosomal RNA large subunit methyltransferase E from Serratia proteamaculans (strain 568).